The primary structure comprises 315 residues: Acetaldehyde dehydrogenase 1 (315 aa).

Residue 12-15 (SGNI) coordinates NAD(+). The active-site Acyl-thioester intermediate is the Cys132. NAD(+) is bound by residues 163–171 (SAGPGTRAN) and Asn291.

It belongs to the acetaldehyde dehydrogenase family.

It carries out the reaction acetaldehyde + NAD(+) + CoA = acetyl-CoA + NADH + H(+). This chain is Acetaldehyde dehydrogenase 1, found in Paraburkholderia phymatum (strain DSM 17167 / CIP 108236 / LMG 21445 / STM815) (Burkholderia phymatum).